The sequence spans 301 residues: Probable 5-dehydro-4-deoxyglucarate dehydratase (301 aa).

It belongs to the DapA family.

The enzyme catalyses 5-dehydro-4-deoxy-D-glucarate + H(+) = 2,5-dioxopentanoate + CO2 + H2O. It participates in carbohydrate acid metabolism; D-glucarate degradation; 2,5-dioxopentanoate from D-glucarate: step 2/2. The protein is Probable 5-dehydro-4-deoxyglucarate dehydratase of Rhizobium meliloti (strain 1021) (Ensifer meliloti).